A 340-amino-acid polypeptide reads, in one-letter code: Envelope glycoprotein K (340 aa).

The N-terminal stretch at 1–21 is a signal peptide; sequence MQALGIKTEHFIIMCLLSGHA. Residues 22 to 114 lie on the Extracellular side of the membrane; sequence VFTLWYTARV…IVLGTRNCHA (93 aa). N-linked (GlcNAc...) asparagine; by host glycosylation occurs at Asn-65. A helical membrane pass occupies residues 115–135; that stretch reads YFWCVQLKMIFFAWFVYGMYL. Over 136-211 the chain is Cytoplasmic; sequence QFRRIRRMFG…PISFLYMHKG (76 aa). The chain crosses the membrane as a helical span at residues 212–232; that stretch reads VTLLMLLEVIAHISSGCIVLL. Topologically, residues 233–248 are extracellular; that stretch reads TLGVAYTPCALLYPTY. Residues 249 to 269 traverse the membrane as a helical segment; that stretch reads IRILAWVVVCTLAIVELISYV. Topologically, residues 270–298 are cytoplasmic; it reads RPKPTKDNHLNHINTGGIRGICTTCCATV. A helical transmembrane segment spans residues 299 to 319; that stretch reads MSGLAIKCFYIVIFAIAVVIF. At 320 to 340 the chain is on the extracellular side; that stretch reads MHYEQRVQVSLFGESENSQKH.

Belongs to the alphaherpesvirinae glycoprotein K family. As to quaternary structure, interacts (via UL20 interaction region) with protein UL20 homolog (via N-terminus); this interaction probably plays a role in the coordinate transport of protein UL20 homolog and gK to the trans-Golgi network (TGN), and is required for the cell surface expression of gK.

Its subcellular location is the host cell membrane. It localises to the host endosome membrane. The protein localises to the host Golgi apparatus membrane. Glycoprotein that probably modulates membrane fusion events during secondary envelopment of cytoplasmic capsids that bud into specific trans-Golgi network (TGN)-derived membranes. Also plays a role, together with gB, in virus-induced cell-to-cell fusion (syncytia formation), which is extensive during VZV infection in cultured cells. The chain is Envelope glycoprotein K (gK) from Varicella-zoster virus (strain Dumas) (HHV-3).